The primary structure comprises 502 residues: Glutamate--tRNA ligase (502 aa).

Positions 12–22 match the 'HIGH' region motif; it reads PSPTGYLHVGG. Residues 259–263 carry the 'KMSKS' region motif; the sequence is KLSKR. Position 262 (Lys262) interacts with ATP.

Belongs to the class-I aminoacyl-tRNA synthetase family. Glutamate--tRNA ligase type 1 subfamily. In terms of assembly, monomer.

The protein localises to the cytoplasm. It catalyses the reaction tRNA(Glu) + L-glutamate + ATP = L-glutamyl-tRNA(Glu) + AMP + diphosphate. Its function is as follows. Catalyzes the attachment of glutamate to tRNA(Glu) in a two-step reaction: glutamate is first activated by ATP to form Glu-AMP and then transferred to the acceptor end of tRNA(Glu). This is Glutamate--tRNA ligase from Pelodictyon phaeoclathratiforme (strain DSM 5477 / BU-1).